Consider the following 149-residue polypeptide: D-aminoacyl-tRNA deacylase (149 aa).

The Gly-cisPro motif, important for rejection of L-amino acids signature appears at 137–138 (GP).

This sequence belongs to the DTD family. As to quaternary structure, homodimer.

It is found in the cytoplasm. It carries out the reaction glycyl-tRNA(Ala) + H2O = tRNA(Ala) + glycine + H(+). The catalysed reaction is a D-aminoacyl-tRNA + H2O = a tRNA + a D-alpha-amino acid + H(+). Functionally, an aminoacyl-tRNA editing enzyme that deacylates mischarged D-aminoacyl-tRNAs. Also deacylates mischarged glycyl-tRNA(Ala), protecting cells against glycine mischarging by AlaRS. Acts via tRNA-based rather than protein-based catalysis; rejects L-amino acids rather than detecting D-amino acids in the active site. By recycling D-aminoacyl-tRNA to D-amino acids and free tRNA molecules, this enzyme counteracts the toxicity associated with the formation of D-aminoacyl-tRNA entities in vivo and helps enforce protein L-homochirality. This is D-aminoacyl-tRNA deacylase from Clostridium acetobutylicum (strain ATCC 824 / DSM 792 / JCM 1419 / IAM 19013 / LMG 5710 / NBRC 13948 / NRRL B-527 / VKM B-1787 / 2291 / W).